The chain runs to 295 residues: Glutamyl-Q tRNA(Asp) synthetase (295 aa).

Residues 5–9 (RFAPS) and glutamate 41 each bind L-glutamate. The 'HIGH' region motif lies at 8–18 (PSPTGLLHIGS). Positions 97, 99, 117, and 121 each coordinate Zn(2+). 2 residues coordinate L-glutamate: tyrosine 178 and arginine 196. The short motif at 234–238 (KWSKQ) is the 'KMSKS' region element. An ATP-binding site is contributed by lysine 237.

It belongs to the class-I aminoacyl-tRNA synthetase family. GluQ subfamily. It depends on Zn(2+) as a cofactor.

Functionally, catalyzes the tRNA-independent activation of glutamate in presence of ATP and the subsequent transfer of glutamate onto a tRNA(Asp). Glutamate is transferred on the 2-amino-5-(4,5-dihydroxy-2-cyclopenten-1-yl) moiety of the queuosine in the wobble position of the QUC anticodon. The polypeptide is Glutamyl-Q tRNA(Asp) synthetase (Neisseria meningitidis serogroup A / serotype 4A (strain DSM 15465 / Z2491)).